Here is a 146-residue protein sequence, read N- to C-terminus: Snaclec coagulation factor IX/factor X-binding protein subunit B (146 aa).

An N-terminal signal peptide occupies residues 1-23 (MGRFIFMSFGFLVVFLSLSGTAA). Positions 24–146 (DCPSDWSSYE…MAQFVCEFQA (123 aa)) constitute a C-type lectin domain. Cystine bridges form between Cys-25–Cys-36, Cys-53–Cys-142, and Cys-119–Cys-134. Ca(2+) is bound by residues Ser-64, Gln-66, and Glu-70. Glu-143 is a binding site for Ca(2+).

It belongs to the snaclec family. Heterodimer with subunit A of IX/X-bp or IX-bp; disulfide-linked. Expressed by the venom gland.

It localises to the secreted. When linked to subunit A of IX/X-bp, anticoagulant protein which binds to the gamma-carboxyglutamic acid-domain regions of factors IX (F9) and factor X (10) in the presence of calcium with a 1 to 1 stoichiometry. Its function is as follows. When linked to subunit A of IX-bp, anticoagulant protein which binds to the gamma-carboxyglutamic acid-domain regions of factor IX (but not to factor X) in the presence of calcium with a 1 to 1 stoichiometry. The sequence is that of Snaclec coagulation factor IX/factor X-binding protein subunit B from Protobothrops flavoviridis (Habu).